The sequence spans 508 residues: Histidine ammonia-lyase (508 aa).

The 5-imidazolinone (Ala-Gly) cross-link spans Ala-143 to Gly-145. Ser-144 carries the post-translational modification 2,3-didehydroalanine (Ser).

This sequence belongs to the PAL/histidase family. Contains an active site 4-methylidene-imidazol-5-one (MIO), which is formed autocatalytically by cyclization and dehydration of residues Ala-Ser-Gly.

Its subcellular location is the cytoplasm. The catalysed reaction is L-histidine = trans-urocanate + NH4(+). Its pathway is amino-acid degradation; L-histidine degradation into L-glutamate; N-formimidoyl-L-glutamate from L-histidine: step 1/3. The chain is Histidine ammonia-lyase from Klebsiella pneumoniae subsp. pneumoniae (strain ATCC 700721 / MGH 78578).